A 906-amino-acid chain; its full sequence is Cadherin-2 (906 aa).

The N-terminal stretch at 1 to 25 (MCRIAGAPRTLLPLLAALLQASVEA) is a signal peptide. Residues 26-159 (SGEIALCKTG…HSGHLQRQKR (134 aa)) constitute a propeptide that is removed on maturation. Ser-96 and Ser-135 each carry phosphoserine. Cadherin domains lie at 160-267 (DWVI…RPEF), 268-382 (LHQV…PPEF), 383-497 (TAMT…NPYF), 498-603 (APNP…DNAP), and 604-714 (QVLP…DVDR). Over 160 to 724 (DWVIPPINLP…IVGAGLGTGA (565 aa)) the chain is Extracellular. Glu-170 is a binding site for Ca(2+). An N-linked (GlcNAc...) asparagine glycan is attached at Asn-190. Positions 226, 228, 259, 260, 261, 262, and 263 each coordinate Ca(2+). Asn-273 carries an N-linked (GlcNAc...) asparagine glycan. Residues Asp-293, Asp-295, and Asn-301 each contribute to the Ca(2+) site. Asn-325 is a glycosylation site (N-linked (GlcNAc...) asparagine). Asp-353 is a Ca(2+) binding site. Asn-402, Asn-572, Asn-622, Asn-651, and Asn-692 each carry an N-linked (GlcNAc...) asparagine glycan. Residues 725–745 (IIAILLCIIILLILVLMFVVW) form a helical membrane-spanning segment. At 746-906 (MKRRDKERQA…LADMYGGGDD (161 aa)) the chain is on the cytoplasmic side. Low complexity predominate over residues 863–880 (SGSTAGSLSSLNSSSSGG). The disordered stretch occupies residues 863 to 884 (SGSTAGSLSSLNSSSSGGEQDY).

As to quaternary structure, homodimer (via extracellular region). Can also form heterodimers with other cadherins (via extracellular region). Dimerization occurs in trans, i.e. with a cadherin chain from another cell. Interacts with CDCP1. Interacts with PCDH8; this complex may also include TAOK2. The interaction with PCDH8 may lead to internalization through TAOK2/p38 MAPK pathway. Identified in a complex containing FGFR4, NCAM1, CDH2, PLCG1, FRS2, SRC, SHC1, GAP43 and CTTN. May interact with OBSCN (via protein kinase domain 2). Interacts with FBXO45. Cleaved by MMP24. Ectodomain cleavage leads to the generation of a soluble 90 kDa N-terminal soluble fragment and a 45 kDa membrane-bound C-terminal fragment 1 (CTF1), which is further cleaved by gamma-secretase into a 35 kDa. Cleavage in neural stem cells by MMP24 affects CDH2-mediated anchorage of neural stem cells to ependymocytes in the adult subependymal zone, leading to modulate neural stem cell quiescence.

The protein resides in the cell membrane. Its subcellular location is the sarcolemma. The protein localises to the cell junction. It is found in the cell surface. It localises to the desmosome. The protein resides in the adherens junction. Functionally, calcium-dependent cell adhesion protein; preferentially mediates homotypic cell-cell adhesion by dimerization with a CDH2 chain from another cell. Cadherins may thus contribute to the sorting of heterogeneous cell types. Acts as a regulator of neural stem cells quiescence by mediating anchorage of neural stem cells to ependymocytes in the adult subependymal zone: upon cleavage by MMP24, CDH2-mediated anchorage is affected, leading to modulate neural stem cell quiescence. Plays a role in cell-to-cell junction formation between pancreatic beta cells and neural crest stem (NCS) cells, promoting the formation of processes by NCS cells. Required for proper neurite branching. Required for pre- and postsynaptic organization. CDH2 may be involved in neuronal recognition mechanism. In hippocampal neurons, may regulate dendritic spine density. In Callithrix jacchus (White-tufted-ear marmoset), this protein is Cadherin-2 (CDH2).